The primary structure comprises 177 residues: Large ribosomal subunit protein uL6 (177 aa).

This sequence belongs to the universal ribosomal protein uL6 family. Part of the 50S ribosomal subunit.

Functionally, this protein binds to the 23S rRNA, and is important in its secondary structure. It is located near the subunit interface in the base of the L7/L12 stalk, and near the tRNA binding site of the peptidyltransferase center. This chain is Large ribosomal subunit protein uL6, found in Acinetobacter baylyi (strain ATCC 33305 / BD413 / ADP1).